We begin with the raw amino-acid sequence, 391 residues long: Cold-shock protein CS120 (391 aa).

Tandem repeats lie at residues 9 to 31, 49 to 62, 72 to 94, 95 to 108, 115 to 128, 135 to 148, 156 to 178, 179 to 192, 199 to 212, 220 to 242, 243 to 256, 263 to 276, 284 to 306, 307 to 320, 327 to 340, 350 to 363, and 374 to 391. The tract at residues 9 to 391 is 6 X 23 AA approximate repeats; the sequence is GEKKGIMEKI…KIKDKLPGQH (383 aa). Basic and acidic residues predominate over residues 21-33; sequence KLPGGHGDHKETA. The segment at 21 to 391 is disordered; the sequence is KLPGGHGDHK…KIKDKLPGQH (371 aa). Over residues 34-59 the composition is skewed to low complexity; it reads GTHGHPGTATHGAPATGGAYGQQGHA. Positions 49 to 363 are 11 X 14 AA approximate repeats; the sequence is TGGAYGQQGH…HGQHGHTGTT (315 aa). A compositionally biased stretch (basic and acidic residues) spans 70 to 92; the sequence is HAGEKKGVMENIKDKLPGGHQDH. Low complexity predominate over residues 93 to 145; sequence QQTGGTYGQQGHTGTATHGTPATGGTYGQQGHTGTATHGTPATGGTYGEQGHT. Residues 155 to 176 show a composition bias toward basic and acidic residues; it reads TGEKKGVMENIKEKLPGGHGDH. Positions 177–196 are enriched in low complexity; it reads QQTGGTYGQQGHTGTATHGT. Over residues 219–240 the composition is skewed to basic and acidic residues; that stretch reads TGEKKGVMENIKDKLPGGHGDH. Low complexity-rich tracts occupy residues 241 to 260 and 272 to 282; these read QQTG…TQGT and HTGMTGAGTHS. Positions 283 to 304 are enriched in basic and acidic residues; the sequence is TGEKKGVMENIKEKLPGGHSDH. Low complexity-rich tracts occupy residues 305–324 and 333–351; these read QQTG…THGT and QHGH…TATG. The span at 361-372 shows a compositional bias: gly residues; it reads GTTGTGTHGSDG. The span at 373-391 shows a compositional bias: basic and acidic residues; that stretch reads IGEKKSLMDKIKDKLPGQH.

It belongs to the plant dehydrin family.

Functionally, may reduce intracellular freezing damage during winter by hydrogen-bonding to the lattice of the nascent ice crystals, thus modifying the structure and/or propagation of ice crystals. In Triticum aestivum (Wheat), this protein is Cold-shock protein CS120 (CS120).